The sequence spans 406 residues: Interactor protein for cytohesin exchange factors 1 (406 aa).

The PH domain maps to 13-112 (HADCQGWLYK…WLNKLGFAVT (100 aa)). Disordered regions lie at residues 120 to 173 (DEEC…FSSL), 253 to 285 (SLNNNKDHLTVPDRAAGSRMADREEIKSSEDDE), and 383 to 406 (PQDPEVTPQEVMNPTSSDCVENSL). A compositionally biased stretch (acidic residues) spans 123-134 (CYSESEQEDPEV). Low complexity predominate over residues 144-153 (ASTTSSPVAA). R164 is subject to Phosphoserine. Basic and acidic residues predominate over residues 272–285 (MADREEIKSSEDDE). The segment covering 392–406 (EVMNPTSSDCVENSL) has biased composition (polar residues).

In terms of assembly, interacts with guanine-nucleotide exchange factors PSCD1, PSCD2, PSCD3 and PSCD4.

The protein resides in the cytoplasm. It localises to the cell membrane. Its function is as follows. Enhances the promotion of guanine-nucleotide exchange by PSCD2 on ARF6 in a concentration-dependent manner. This is Interactor protein for cytohesin exchange factors 1 (Ipcef1) from Mus musculus (Mouse).